The primary structure comprises 157 residues: 2-C-methyl-D-erythritol 2,4-cyclodiphosphate synthase (157 aa).

Positions 8, 10, and 42 each coordinate a divalent metal cation. 8–10 (DVH) contacts 4-CDP-2-C-methyl-D-erythritol 2-phosphate. Residues 56 to 58 (DIG), 132 to 135 (STSE), Phe139, and Arg142 contribute to the 4-CDP-2-C-methyl-D-erythritol 2-phosphate site.

This sequence belongs to the IspF family. In terms of assembly, homotrimer. Requires a divalent metal cation as cofactor.

The enzyme catalyses 4-CDP-2-C-methyl-D-erythritol 2-phosphate = 2-C-methyl-D-erythritol 2,4-cyclic diphosphate + CMP. Its pathway is isoprenoid biosynthesis; isopentenyl diphosphate biosynthesis via DXP pathway; isopentenyl diphosphate from 1-deoxy-D-xylulose 5-phosphate: step 4/6. Involved in the biosynthesis of isopentenyl diphosphate (IPP) and dimethylallyl diphosphate (DMAPP), two major building blocks of isoprenoid compounds. Catalyzes the conversion of 4-diphosphocytidyl-2-C-methyl-D-erythritol 2-phosphate (CDP-ME2P) to 2-C-methyl-D-erythritol 2,4-cyclodiphosphate (ME-CPP) with a corresponding release of cytidine 5-monophosphate (CMP). The sequence is that of 2-C-methyl-D-erythritol 2,4-cyclodiphosphate synthase from Dehalococcoides mccartyi (strain ATCC BAA-2266 / KCTC 15142 / 195) (Dehalococcoides ethenogenes (strain 195)).